The following is a 405-amino-acid chain: Aminodeoxyfutalosine deaminase (405 aa).

The a divalent metal cation site is built by histidine 61 and histidine 63. Residues glutamate 141, serine 145, and histidine 179 each coordinate substrate. An a divalent metal cation-binding site is contributed by histidine 206. Glutamate 209 serves as the catalytic Proton donor. Aspartate 306 serves as a coordination point for a divalent metal cation.

It belongs to the metallo-dependent hydrolases superfamily. A divalent metal cation serves as cofactor.

The enzyme catalyses 6-amino-6-deoxyfutalosine + H2O + H(+) = futalosine + NH4(+). Its pathway is quinol/quinone metabolism; menaquinone biosynthesis. In terms of biological role, catalyzes the deamination of aminodeoxyfutalosine (AFL) into futalosine (FL), a step in the biosynthesis of menaquinone (MK, vitamin K2). To a lesser extent, can also deaminate 5'-methylthioadenosine. This Nitratiruptor sp. (strain SB155-2) protein is Aminodeoxyfutalosine deaminase.